Reading from the N-terminus, the 166-residue chain is Lipoprotein signal peptidase (166 aa).

A run of 3 helical transmembrane segments spans residues 12–32, 70–90, and 102–122; these read WLWL…LILQ, WFFA…MYRA, and ALII…GFVV. Catalysis depends on residues D123 and D141. Residues 142-162 form a helical membrane-spanning segment; it reads SAICFGAAMIVLEGFLPNAAA.

Belongs to the peptidase A8 family.

The protein resides in the cell inner membrane. The catalysed reaction is Release of signal peptides from bacterial membrane prolipoproteins. Hydrolyzes -Xaa-Yaa-Zaa-|-(S,diacylglyceryl)Cys-, in which Xaa is hydrophobic (preferably Leu), and Yaa (Ala or Ser) and Zaa (Gly or Ala) have small, neutral side chains.. It participates in protein modification; lipoprotein biosynthesis (signal peptide cleavage). This protein specifically catalyzes the removal of signal peptides from prolipoproteins. The sequence is that of Lipoprotein signal peptidase from Enterobacter sp. (strain 638).